The sequence spans 434 residues: D-amino acid dehydrogenase (434 aa).

Residue 3–17 participates in FAD binding; sequence VLVLGSGVIGTASAY.

Belongs to the DadA oxidoreductase family. FAD is required as a cofactor.

It carries out the reaction a D-alpha-amino acid + A + H2O = a 2-oxocarboxylate + AH2 + NH4(+). It functions in the pathway amino-acid degradation; D-alanine degradation; NH(3) and pyruvate from D-alanine: step 1/1. Functionally, oxidative deamination of D-amino acids. The polypeptide is D-amino acid dehydrogenase (Pseudomonas putida (strain GB-1)).